The following is a 70-amino-acid chain: U2-agatoxin-Ao1q (70 aa).

The first 20 residues, 1–20, serve as a signal peptide directing secretion; it reads MRSIISLLLISAMVFSMIAA. A propeptide spanning residues 21-34 is cleaved from the precursor; sequence VPEEEGLQLSEDER. Intrachain disulfides connect cysteine 44-cysteine 58 and cysteine 52-cysteine 68. Leucine 69 is subject to Leucine amide.

It belongs to the neurotoxin 01 (U2-agtx) family. Post-translationally, does not contain a cysteine at position 53 which disrupts the cysteine framework. In terms of tissue distribution, expressed by the venom gland.

Its subcellular location is the secreted. Insect active toxin causing rapid but reversible paralysis in crickets. No activity shown in mammals. Does not show effect on mammalian voltage-gated calcium channels. In Agelena orientalis (Funnel-web spider), this protein is U2-agatoxin-Ao1q.